Reading from the N-terminus, the 585-residue chain is MASRWLALLWAPVFLCVALILETASGTGDPSTKAHGHIQFSAGSVNQTAMADCRAVCGLNTSDRCDFVRRNPDCRSEAGYLDYLEGIFCYFPPNLLPLAITLYVFWLLYLFLILGVTAAKFFCPNLSAISTNLKLSHNVAGVTFLAFGNGAPDIFSALVAFSDPRTAGLAIGALFGAGVLVTTVVAGGITILHPFMAASRPFLRDIAFYMVAVFLTFTALYLGRITLTWALGYLGLYVFYVVTVIICTWVYQRQRSRSLVHSISETPELLSESEEDQMSSNTNSYDYGDEYRPLLLGRETTVQILIQALNPLDYRKWRTQSISWRVLKVVKLPVEFLLLLTVPVVDPDKDDRNWKRPLNCLQLVISPLVLVLTLQSGVYGIYEIGGLLPVWAVVVIVGTALASVTFFATSNREPPRLHWLFAFLGFLTSALWINAAATEVVNILRSLGVIFRLSNTVLGLTLLAWGNSIGDAFSDFTLARQGYPRMAFSACFGGIIFNILVGVGLGCLLQIIRNHVVEVKLEPDGLLVWVLASALGLSLIFSLVSVPLQCFQLSKAYGLCLLLFYICFLVVVLLTEFGVIHLKKA.

The signal sequence occupies residues 1–26; that stretch reads MASRWLALLWAPVFLCVALILETASG. Residues 27–95 lie on the Extracellular side of the membrane; that stretch reads TGDPSTKAHG…GIFCYFPPNL (69 aa). An N-linked (GlcNAc...) asparagine glycan is attached at Asn46. The helical transmembrane segment at 96–116 threads the bilayer; that stretch reads LPLAITLYVFWLLYLFLILGV. At 117-140 the chain is on the cytoplasmic side; it reads TAAKFFCPNLSAISTNLKLSHNVA. The helical transmembrane segment at 141-161 threads the bilayer; the sequence is GVTFLAFGNGAPDIFSALVAF. Over 162-168 the chain is Extracellular; that stretch reads SDPRTAG. The chain crosses the membrane as a helical span at residues 169-189; the sequence is LAIGALFGAGVLVTTVVAGGI. At 190–205 the chain is on the cytoplasmic side; it reads TILHPFMAASRPFLRD. Residues 206–226 form a helical membrane-spanning segment; sequence IAFYMVAVFLTFTALYLGRIT. The Extracellular segment spans residues 227–229; that stretch reads LTW. The helical transmembrane segment at 230-250 threads the bilayer; the sequence is ALGYLGLYVFYVVTVIICTWV. Residues 251–325 lie on the Cytoplasmic side of the membrane; it reads YQRQRSRSLV…KWRTQSISWR (75 aa). Ser258 bears the Phosphoserine; by PKA mark. A helical membrane pass occupies residues 326–346; it reads VLKVVKLPVEFLLLLTVPVVD. The Extracellular portion of the chain corresponds to 347–360; the sequence is PDKDDRNWKRPLNC. A helical transmembrane segment spans residues 361–381; it reads LQLVISPLVLVLTLQSGVYGI. Residues 382–383 are Cytoplasmic-facing; the sequence is YE. A helical membrane pass occupies residues 384–404; sequence IGGLLPVWAVVVIVGTALASV. The Extracellular portion of the chain corresponds to 405–416; that stretch reads TFFATSNREPPR. A helical transmembrane segment spans residues 417–437; the sequence is LHWLFAFLGFLTSALWINAAA. Residues 438–445 lie on the Cytoplasmic side of the membrane; it reads TEVVNILR. The helical transmembrane segment at 446–466 threads the bilayer; the sequence is SLGVIFRLSNTVLGLTLLAWG. Over 467-491 the chain is Extracellular; it reads NSIGDAFSDFTLARQGYPRMAFSAC. The helical transmembrane segment at 492-512 threads the bilayer; it reads FGGIIFNILVGVGLGCLLQII. Residues 513-525 lie on the Cytoplasmic side of the membrane; sequence RNHVVEVKLEPDG. A helical membrane pass occupies residues 526–546; that stretch reads LLVWVLASALGLSLIFSLVSV. Residues 547-559 are Extracellular-facing; the sequence is PLQCFQLSKAYGL. A helical transmembrane segment spans residues 560–580; it reads CLLLFYICFLVVVLLTEFGVI. Over 581 to 585 the chain is Cytoplasmic; it reads HLKKA.

This sequence belongs to the Ca(2+):cation antiporter (CaCA) (TC 2.A.19) family. SLC24A subfamily. Post-translationally, phosphorylation at Ser-258 by PKA prevents calcium overload. In terms of tissue distribution, ubiquitously expressed. Expressed in dental tissues.

Its subcellular location is the mitochondrion inner membrane. It localises to the cell membrane. It catalyses the reaction Ca(2+)(in) + 3 Na(+)(out) = Ca(2+)(out) + 3 Na(+)(in). The catalysed reaction is 3 Li(+)(out) + Ca(2+)(in) = 3 Li(+)(in) + Ca(2+)(out). With respect to regulation, inhibited by the sodium/calcium exchanger inhibitor CGP-37157. Strongly inhibited by zinc. Mitochondrial sodium/calcium antiporter that mediates sodium-dependent calcium efflux from mitochondrion, by mediating the exchange of 3 sodium ions per 1 calcium ion. Plays a central role in mitochondrial calcium homeostasis by mediating mitochondrial calcium extrusion: calcium efflux is essential for mitochondrial function and cell survival, notably in cardiomyocytes. Regulates rates of glucose-dependent insulin secretion in pancreatic beta-cells during the first phase of insulin secretion: acts by mediating efflux of calcium from mitochondrion, thereby affecting cytoplasmic calcium responses. Required for store-operated Ca(2+) entry (SOCE) and Ca(2+) release-activated Ca(2+) (CRAC) channel regulation: sodium transport by SLC8B1 leads to promote calcium-shuttling that modulates mitochondrial redox status, thereby regulating SOCE activity. Involved in B-lymphocyte chemotaxis. Able to transport Ca(2+) in exchange of either Li(+) or Na(+), explaining how Li(+) catalyzes Ca(2+) exchange. In contrast to other members of the family its function is independent of K(+). The sequence is that of Mitochondrial sodium/calcium exchanger protein from Mus musculus (Mouse).